Here is a 113-residue protein sequence, read N- to C-terminus: Protein translation factor SUI1 homolog (113 aa).

Belongs to the SUI1 family.

Functionally, probably involved in translation. In Spuriopimpinella brachycarpa (Chamnamul), this protein is Protein translation factor SUI1 homolog.